Consider the following 178-residue polypeptide: Inorganic pyrophosphatase (178 aa).

Substrate is bound by residues K30, R44, and Y56. Mg(2+)-binding residues include D66, D71, and D103. Y142 is a substrate binding site.

This sequence belongs to the PPase family. Homohexamer. Mg(2+) serves as cofactor.

Its subcellular location is the cytoplasm. The catalysed reaction is diphosphate + H2O = 2 phosphate + H(+). Its function is as follows. Catalyzes the hydrolysis of inorganic pyrophosphate (PPi) forming two phosphate ions. The polypeptide is Inorganic pyrophosphatase (Xanthomonas axonopodis pv. citri (strain 306)).